The primary structure comprises 232 residues: MATPGRPWAQARSAYRASEVLRRVTGRRRDPGPQSNGPGREDARAPGRLARLLRQLRAEAASRSEVPRLLKLVERAGAGAAGAGERTGAHSRGSVCSVCGEPRGRATYPAGVLEVSERRLQEGLAAVREELGAEIEALRAELRAELDALRALLPPPPPSPPARREPRAVPRAAPRGPTLLRTLGTVSALVAASRPADDAPDGPAECGAHRAPARKNHKKMPVPPGAPQGGGD.

A compositionally biased stretch (basic and acidic residues) spans glutamate 19–proline 31. Disordered regions lie at residues glutamate 19 to glycine 47, alanine 80 to glutamate 101, alanine 151 to leucine 179, and alanine 191 to aspartate 232. Basic residues predominate over residues alanine 211–methionine 220.

This sequence belongs to the FAM246 family.

The sequence is that of Protein FAM246B from Homo sapiens (Human).